The primary structure comprises 101 residues: Protein translation factor SUI1 homolog (101 aa).

The protein belongs to the SUI1 family.

The protein is Protein translation factor SUI1 homolog of Methanosphaera stadtmanae (strain ATCC 43021 / DSM 3091 / JCM 11832 / MCB-3).